We begin with the raw amino-acid sequence, 132 residues long: Ribosome-binding factor A (132 aa).

It belongs to the RbfA family. As to quaternary structure, monomer. Binds 30S ribosomal subunits, but not 50S ribosomal subunits or 70S ribosomes.

It localises to the cytoplasm. Its function is as follows. One of several proteins that assist in the late maturation steps of the functional core of the 30S ribosomal subunit. Associates with free 30S ribosomal subunits (but not with 30S subunits that are part of 70S ribosomes or polysomes). Required for efficient processing of 16S rRNA. May interact with the 5'-terminal helix region of 16S rRNA. The polypeptide is Ribosome-binding factor A (Xanthomonas campestris pv. campestris (strain 8004)).